Here is a 2454-residue protein sequence, read N- to C-terminus: Probable serine/threonine-protein kinase DDB_G0277071 (2454 aa).

The segment covering 31–51 has biased composition (low complexity); that stretch reads TSSLTTTTTTTTTTTTTTSTT. 6 disordered regions span residues 31 to 57, 206 to 265, 340 to 612, 963 to 1051, 1201 to 1330, and 1342 to 1528; these read TSSL…HESN, QQQL…QKQN, PRPP…LKIE, NNIN…NENE, SSDD…SNPL, and ISKG…SNNT. The stretch at 259 to 307 forms a coiled coil; the sequence is KQQQKQNSQQQQQQQQQQQQQQQQQQQQQQQQQQQQQQQQQQQKLNIHE. Composition is skewed to low complexity over residues 346–399 and 406–428; these read QQHQ…NITP and PSSV…KPTS. Over residues 429–444 the composition is skewed to polar residues; sequence IGQIQSLHYHNPSLYQ. 2 stretches are compositionally biased toward low complexity: residues 450–461 and 475–536; these read NRNRGNNNNNNN and SSTV…NTPN. The segment covering 553–568 has biased composition (gly residues); that stretch reads GGIGGGGGGGSGGGGI. Composition is skewed to low complexity over residues 963–1048, 1201–1248, 1275–1284, 1299–1324, and 1346–1403; these read NNIN…TTTN, SSDD…TGGP, NSSNNNNTSS, SGSS…PTTG, and SPAS…SVST. Residues 1417–1441 show a composition bias toward polar residues; that stretch reads LNLSSVSKTGQASTSTPNLLNLKNI. Over residues 1442 to 1478 the composition is skewed to low complexity; that stretch reads PTTTNNSNSTTTTTTTTPTGKPQFSLNLSSLSKSSSS. Residues 1479–1491 are compositionally biased toward polar residues; it reads TETVPPSQPNQPI. Residues 1509–1528 show a composition bias toward low complexity; that stretch reads STTTTTTTTTPPPINNSNNT. The 305-residue stretch at 1730-2034 folds into the Protein kinase domain; it reads FKDLKRVAKG…TKFIAIKPTI (305 aa). Residues 1736 to 1744 and lysine 1760 contribute to the ATP site; that span reads VAKGAYGTV. Aspartate 1858 serves as the catalytic Proton acceptor. The region spanning 2130-2271 is the Tyrosine-protein phosphatase domain; the sequence is RPSKVASFMY…LCRWGKQRRN (142 aa). The tract at residues 2379 to 2404 is disordered; sequence NINNNNNNNSNNSKSKQQQQQQQNQN.

It belongs to the protein kinase superfamily. Ser/Thr protein kinase family.

It carries out the reaction L-seryl-[protein] + ATP = O-phospho-L-seryl-[protein] + ADP + H(+). The catalysed reaction is L-threonyl-[protein] + ATP = O-phospho-L-threonyl-[protein] + ADP + H(+). The protein is Probable serine/threonine-protein kinase DDB_G0277071 of Dictyostelium discoideum (Social amoeba).